The chain runs to 161 residues: 2-C-methyl-D-erythritol 2,4-cyclodiphosphate synthase (161 aa).

The a divalent metal cation site is built by Asp10 and His12. Residues 10–12 (DVH) and 36–37 (HS) contribute to the 4-CDP-2-C-methyl-D-erythritol 2-phosphate site. His44 provides a ligand contact to a divalent metal cation. 4-CDP-2-C-methyl-D-erythritol 2-phosphate contacts are provided by residues 58-60 (DIG), 134-137 (TTTE), Phe141, and Arg144.

This sequence belongs to the IspF family. In terms of assembly, homotrimer. Requires a divalent metal cation as cofactor.

The enzyme catalyses 4-CDP-2-C-methyl-D-erythritol 2-phosphate = 2-C-methyl-D-erythritol 2,4-cyclic diphosphate + CMP. It functions in the pathway isoprenoid biosynthesis; isopentenyl diphosphate biosynthesis via DXP pathway; isopentenyl diphosphate from 1-deoxy-D-xylulose 5-phosphate: step 4/6. Involved in the biosynthesis of isopentenyl diphosphate (IPP) and dimethylallyl diphosphate (DMAPP), two major building blocks of isoprenoid compounds. Catalyzes the conversion of 4-diphosphocytidyl-2-C-methyl-D-erythritol 2-phosphate (CDP-ME2P) to 2-C-methyl-D-erythritol 2,4-cyclodiphosphate (ME-CPP) with a corresponding release of cytidine 5-monophosphate (CMP). The polypeptide is 2-C-methyl-D-erythritol 2,4-cyclodiphosphate synthase (Parabacteroides distasonis (strain ATCC 8503 / DSM 20701 / CIP 104284 / JCM 5825 / NCTC 11152)).